Reading from the N-terminus, the 448-residue chain is Ribulose bisphosphate carboxylase large chain (448 aa).

Positions M1 to S2 are excised as a propeptide. Position 3 is an N-acetylproline (P3). An N6,N6,N6-trimethyllysine modification is found at K14. Substrate is bound by residues N122 and T172. Residue K174 is the Proton acceptor of the active site. A substrate-binding site is contributed by K176. Residues K200, D202, and E203 each coordinate Mg(2+). The residue at position 200 (K200) is an N6-carboxylysine. Catalysis depends on H293, which acts as the Proton acceptor. R294, H326, and S378 together coordinate substrate.

It belongs to the RuBisCO large chain family. Type I subfamily. In terms of assembly, heterohexadecamer of 8 large chains and 8 small chains; disulfide-linked. The disulfide link is formed within the large subunit homodimers. Requires Mg(2+) as cofactor. In terms of processing, the disulfide bond which can form in the large chain dimeric partners within the hexadecamer appears to be associated with oxidative stress and protein turnover.

The protein localises to the plastid. The protein resides in the chloroplast. It catalyses the reaction 2 (2R)-3-phosphoglycerate + 2 H(+) = D-ribulose 1,5-bisphosphate + CO2 + H2O. The enzyme catalyses D-ribulose 1,5-bisphosphate + O2 = 2-phosphoglycolate + (2R)-3-phosphoglycerate + 2 H(+). In terms of biological role, ruBisCO catalyzes two reactions: the carboxylation of D-ribulose 1,5-bisphosphate, the primary event in carbon dioxide fixation, as well as the oxidative fragmentation of the pentose substrate in the photorespiration process. Both reactions occur simultaneously and in competition at the same active site. In Dichapetalum crassifolium, this protein is Ribulose bisphosphate carboxylase large chain.